The chain runs to 685 residues: Beta-taxilin (685 aa).

The tract at residues 1–135 (MEINHPDQLS…KEPVSNKEQK (135 aa)) is disordered. Residues 18-28 (GDSSSLNQNGP) are compositionally biased toward polar residues. Basic and acidic residues-rich tracts occupy residues 47 to 67 (GSLH…RQLE) and 80 to 90 (RGKESTSETKE). A compositionally biased stretch (acidic residues) spans 98–113 (PDNEDVDYEETTEEID). 2 coiled-coil regions span residues 138-354 (KKIL…VLKE) and 381-470 (NEVF…SEKE). Residues 465-478 (KMSEKEDQVQRTSE) are compositionally biased toward basic and acidic residues. Disordered regions lie at residues 465–497 (KMSE…EEAN) and 517–685 (EFTP…NGVD). A phosphoserine mark is found at S477, S484, and S486. A compositionally biased stretch (acidic residues) spans 479-495 (EEPEPSVSENEEVDAEE). A compositionally biased stretch (low complexity) spans 575–591 (CEATPAPTASCTPAEAE). Positions 612–627 (ANTSGQAPLSPAQGSL) are enriched in polar residues.

Belongs to the taxilin family. As to quaternary structure, binds to the C-terminal coiled coil region of syntaxin family members STX1A, STX3A and STX4A. Has a preference for STX1A. In terms of tissue distribution, specifically expressed in skeletal muscle.

In terms of biological role, promotes motor nerve regeneration. May be involved in intracellular vesicle traffic. In Mus musculus (Mouse), this protein is Beta-taxilin (Txlnb).